A 1037-amino-acid polypeptide reads, in one-letter code: Multidrug resistance protein MdtF (1037 aa).

The Cytoplasmic portion of the chain corresponds to 1–9; the sequence is MANYFIDRP. A helical membrane pass occupies residues 10–28; that stretch reads VFAWVLAIIMMLAGGLAIM. Residues 29–339 are Periplasmic-facing; that stretch reads NLPVAQYPQI…TPFIEISIQE (311 aa). A helical membrane pass occupies residues 340-359; the sequence is VFKTLVEAIILVFLVMYLFL. The Cytoplasmic portion of the chain corresponds to 360–365; that stretch reads QNFRAT. A helical transmembrane segment spans residues 366–385; that stretch reads IIPTIAVPVVILGTFAILSA. The Periplasmic portion of the chain corresponds to 386–391; it reads VGFTIN. The chain crosses the membrane as a helical span at residues 392-413; sequence TLTMFGMVLAIGLLVDDAIVVV. Topologically, residues 414–441 are cytoplasmic; it reads ENVERVIAEDKLPPKEATHKSMGQIQRA. Residues 442-460 traverse the membrane as a helical segment; the sequence is LVGIAVVLSAVFMPMAFMS. The Periplasmic portion of the chain corresponds to 461-473; the sequence is GATGEIYRQFSIT. The chain crosses the membrane as a helical span at residues 474–496; sequence LISSMLLSVFVAMSLTPALCATI. Residues 497-536 lie on the Cytoplasmic side of the membrane; sequence LKAAPEGGHKPNALFARFNTLFEKSTQHYTDSTRSLLRCT. The chain crosses the membrane as a helical span at residues 537 to 555; it reads GRYMVVYLLICAGMAVLFL. The Periplasmic segment spans residues 556-870; sequence RTPTSFLPEE…SYQEALSSNQ (315 aa). Residues 871–890 traverse the membrane as a helical segment; the sequence is APALYAISLVVVFLALAALY. Residues 891–896 are Cytoplasmic-facing; sequence ESWSIP. The helical transmembrane segment at 897-916 threads the bilayer; the sequence is FSVMLVVPLGVVGALLATDL. At 917–922 the chain is on the periplasmic side; the sequence is RGLSND. Residues 923-944 form a helical membrane-spanning segment; it reads VYFQVGLLTTIGLSAKNAILIV. At 945 to 972 the chain is on the cytoplasmic side; the sequence is EFAVEMMQKEGKTPIEAIIEAARMRLRP. Residues 973–991 traverse the membrane as a helical segment; sequence ILMTSLAFILGVLPLVISH. At 992-1004 the chain is on the periplasmic side; it reads GAGSGAQNAVGTG. A helical transmembrane segment spans residues 1005–1027; sequence VMGGMFAATVLAIYFVPVFFVVV. Over 1028–1037 the chain is Cytoplasmic; that stretch reads EHLFARFKKA.

The protein belongs to the resistance-nodulation-cell division (RND) (TC 2.A.6) family. In terms of assembly, homotrimer. Part of the tripartite efflux system MdtEF-TolC, which is composed of an inner membrane transporter, MdtF, a membrane fusion protein, MdtE, and an outer membrane component, TolC. The complex forms a large protein conduit and can translocate molecules across both the inner and outer membranes.

The protein resides in the cell inner membrane. Its function is as follows. Part of the tripartite efflux system MdtEF-TolC, which confers resistance to compounds such as rhodamine 6G, erythromycin, doxorubicin, ethidium bromide, TPP, SDS, deoxycholate, crystal violet and benzalkonium. The polypeptide is Multidrug resistance protein MdtF (mdtF) (Escherichia coli (strain K12)).